Consider the following 236-residue polypeptide: Lipoprotein signal peptidase (236 aa).

The next 4 membrane-spanning stretches (helical) occupy residues 8–28, 44–64, 68–88, and 98–118; these read FYGI…WVYF, WFKL…FGFT, VLLT…IWNL, and LLWG…DSIF. Active-site residues include Asp141 and Asp174. The chain crosses the membrane as a helical span at residues 166-186; the sequence is CLPVFNLADVAILAGVALIVL.

It belongs to the peptidase A8 family.

It is found in the cell inner membrane. The catalysed reaction is Release of signal peptides from bacterial membrane prolipoproteins. Hydrolyzes -Xaa-Yaa-Zaa-|-(S,diacylglyceryl)Cys-, in which Xaa is hydrophobic (preferably Leu), and Yaa (Ala or Ser) and Zaa (Gly or Ala) have small, neutral side chains.. The protein operates within protein modification; lipoprotein biosynthesis (signal peptide cleavage). Functionally, this protein specifically catalyzes the removal of signal peptides from prolipoproteins. This Amoebophilus asiaticus (strain 5a2) protein is Lipoprotein signal peptidase.